Here is a 265-residue protein sequence, read N- to C-terminus: Adenosylcobinamide-GDP ribazoletransferase (265 aa).

7 helical membrane-spanning segments follow: residues 40–60, 67–87, 121–141, 150–170, 191–211, 213–233, and 243–263; these read IAYA…VVLV, LPAF…TGAF, GGCA…ALVA, LALV…LLAL, LACA…GFGI, TAFA…RLSG, and VAGA…LIFP.

Belongs to the CobS family. Mg(2+) serves as cofactor.

Its subcellular location is the cell inner membrane. It catalyses the reaction alpha-ribazole + adenosylcob(III)inamide-GDP = adenosylcob(III)alamin + GMP + H(+). It carries out the reaction alpha-ribazole 5'-phosphate + adenosylcob(III)inamide-GDP = adenosylcob(III)alamin 5'-phosphate + GMP + H(+). The protein operates within cofactor biosynthesis; adenosylcobalamin biosynthesis; adenosylcobalamin from cob(II)yrinate a,c-diamide: step 7/7. Its function is as follows. Joins adenosylcobinamide-GDP and alpha-ribazole to generate adenosylcobalamin (Ado-cobalamin). Also synthesizes adenosylcobalamin 5'-phosphate from adenosylcobinamide-GDP and alpha-ribazole 5'-phosphate. This chain is Adenosylcobinamide-GDP ribazoletransferase, found in Xanthobacter autotrophicus (strain ATCC BAA-1158 / Py2).